The primary structure comprises 443 residues: 3-phosphoshikimate 1-carboxyvinyltransferase (443 aa).

3 residues coordinate 3-phosphoshikimate: K24, S25, and R29. K24 contributes to the phosphoenolpyruvate binding site. The phosphoenolpyruvate site is built by G95 and R123. 3-phosphoshikimate-binding residues include S167, Q169, D323, and K350. Q169 serves as a coordination point for phosphoenolpyruvate. D323 (proton acceptor) is an active-site residue. R354 and R398 together coordinate phosphoenolpyruvate.

Belongs to the EPSP synthase family. Monomer.

It localises to the cytoplasm. It carries out the reaction 3-phosphoshikimate + phosphoenolpyruvate = 5-O-(1-carboxyvinyl)-3-phosphoshikimate + phosphate. It functions in the pathway metabolic intermediate biosynthesis; chorismate biosynthesis; chorismate from D-erythrose 4-phosphate and phosphoenolpyruvate: step 6/7. In terms of biological role, catalyzes the transfer of the enolpyruvyl moiety of phosphoenolpyruvate (PEP) to the 5-hydroxyl of shikimate-3-phosphate (S3P) to produce enolpyruvyl shikimate-3-phosphate and inorganic phosphate. The chain is 3-phosphoshikimate 1-carboxyvinyltransferase from Caulobacter vibrioides (strain ATCC 19089 / CIP 103742 / CB 15) (Caulobacter crescentus).